The chain runs to 192 residues: Glycerol-3-phosphate acyltransferase (192 aa).

Helical transmembrane passes span 4 to 24 (FAII…DVVI), 48 to 68 (LVLV…WVGY), 74 to 94 (YFEL…PIFF), 101 to 121 (GVAT…GSML), and 125 to 145 (LLIF…ALIL).

The protein belongs to the PlsY family. In terms of assembly, probably interacts with PlsX.

It is found in the cell inner membrane. The catalysed reaction is an acyl phosphate + sn-glycerol 3-phosphate = a 1-acyl-sn-glycero-3-phosphate + phosphate. The protein operates within lipid metabolism; phospholipid metabolism. Catalyzes the transfer of an acyl group from acyl-phosphate (acyl-PO(4)) to glycerol-3-phosphate (G3P) to form lysophosphatidic acid (LPA). This enzyme utilizes acyl-phosphate as fatty acyl donor, but not acyl-CoA or acyl-ACP. This is Glycerol-3-phosphate acyltransferase from Histophilus somni (strain 129Pt) (Haemophilus somnus).